Here is a 77-residue protein sequence, read N- to C-terminus: NAD(P)H-quinone oxidoreductase subunit L (77 aa).

Transmembrane regions (helical) follow at residues 12-32 (LIAYMGVITIYLLVIPLLLFY) and 47-67 (LGIYGLVFLFFPGLILFSPFL).

Belongs to the complex I NdhL subunit family. In terms of assembly, NDH-1 can be composed of about 15 different subunits; different subcomplexes with different compositions have been identified which probably have different functions.

It localises to the cellular thylakoid membrane. The enzyme catalyses a plastoquinone + NADH + (n+1) H(+)(in) = a plastoquinol + NAD(+) + n H(+)(out). It catalyses the reaction a plastoquinone + NADPH + (n+1) H(+)(in) = a plastoquinol + NADP(+) + n H(+)(out). In terms of biological role, NDH-1 shuttles electrons from an unknown electron donor, via FMN and iron-sulfur (Fe-S) centers, to quinones in the respiratory and/or the photosynthetic chain. The immediate electron acceptor for the enzyme in this species is believed to be plastoquinone. Couples the redox reaction to proton translocation, and thus conserves the redox energy in a proton gradient. Cyanobacterial NDH-1 also plays a role in inorganic carbon-concentration. The chain is NAD(P)H-quinone oxidoreductase subunit L from Prochlorococcus marinus (strain MIT 9312).